The chain runs to 177 residues: Adenine phosphoribosyltransferase (177 aa).

Belongs to the purine/pyrimidine phosphoribosyltransferase family. In terms of assembly, homodimer.

The protein localises to the cytoplasm. The enzyme catalyses AMP + diphosphate = 5-phospho-alpha-D-ribose 1-diphosphate + adenine. It functions in the pathway purine metabolism; AMP biosynthesis via salvage pathway; AMP from adenine: step 1/1. In terms of biological role, catalyzes a salvage reaction resulting in the formation of AMP, that is energically less costly than de novo synthesis. The protein is Adenine phosphoribosyltransferase of Mycoplasma pneumoniae (strain ATCC 29342 / M129 / Subtype 1) (Mycoplasmoides pneumoniae).